The sequence spans 246 residues: Octanoyltransferase (246 aa).

One can recognise a BPL/LPL catalytic domain in the interval 38-213 (AQQSDEFWVL…FLAKRLGLTP (176 aa)). Substrate contacts are provided by residues 77-84 (RGGQVTYH), 144-146 (SLG), and 157-159 (GLA). Catalysis depends on Cys175, which acts as the Acyl-thioester intermediate. The disordered stretch occupies residues 225-246 (RQENVTTGGDPGSALTQQPERL).

It belongs to the LipB family.

The protein localises to the cytoplasm. The enzyme catalyses octanoyl-[ACP] + L-lysyl-[protein] = N(6)-octanoyl-L-lysyl-[protein] + holo-[ACP] + H(+). The protein operates within protein modification; protein lipoylation via endogenous pathway; protein N(6)-(lipoyl)lysine from octanoyl-[acyl-carrier-protein]: step 1/2. In terms of biological role, catalyzes the transfer of endogenously produced octanoic acid from octanoyl-acyl-carrier-protein onto the lipoyl domains of lipoate-dependent enzymes. Lipoyl-ACP can also act as a substrate although octanoyl-ACP is likely to be the physiological substrate. This Alcanivorax borkumensis (strain ATCC 700651 / DSM 11573 / NCIMB 13689 / SK2) protein is Octanoyltransferase.